We begin with the raw amino-acid sequence, 183 residues long: Large ribosomal subunit protein bL25 (183 aa).

This sequence belongs to the bacterial ribosomal protein bL25 family. CTC subfamily. As to quaternary structure, part of the 50S ribosomal subunit; part of the 5S rRNA/L5/L18/L25 subcomplex. Contacts the 5S rRNA. Binds to the 5S rRNA independently of L5 and L18.

This is one of the proteins that binds to the 5S RNA in the ribosome where it forms part of the central protuberance. In Desulfotalea psychrophila (strain LSv54 / DSM 12343), this protein is Large ribosomal subunit protein bL25.